A 538-amino-acid polypeptide reads, in one-letter code: Putative cysteine ligase BshC (538 aa).

Residues 460-484 (KINEQIELLERMLKRNVEKKHEVEL) are a coiled coil.

The protein belongs to the BshC family.

Functionally, involved in bacillithiol (BSH) biosynthesis. May catalyze the last step of the pathway, the addition of cysteine to glucosamine malate (GlcN-Mal) to generate BSH. The polypeptide is Putative cysteine ligase BshC (Bacillus thuringiensis subsp. konkukian (strain 97-27)).